A 322-amino-acid polypeptide reads, in one-letter code: Transmembrane and ubiquitin-like domain-containing protein 2 (322 aa).

Residues 38-58 (VVAGVVVLILALVLAWLSTYV) traverse the membrane as a helical segment. The disordered stretch occupies residues 88–168 (VAGQGTPEPT…VRSEDSTCLP (81 aa)). The span at 115 to 130 (EGGGDPTGEPGAGGGV) shows a compositional bias: gly residues. One can recognise a Ubiquitin-like domain in the interval 174–247 (ISVRLKFFND…IHCHRSPPGS (74 aa)). The next 2 helical transmembrane spans lie at 267 to 287 (LGVS…GVVW) and 296 to 316 (FFTA…SFLV).

It is found in the membrane. This Bos taurus (Bovine) protein is Transmembrane and ubiquitin-like domain-containing protein 2 (TMUB2).